The chain runs to 307 residues: Mitochondrial brown fat uncoupling protein 1 (307 aa).

Residues Val-2–His-10 lie on the Mitochondrial intermembrane side of the membrane. The chain crosses the membrane as a helical span at residues Pro-11–Phe-32. Solcar repeat units lie at residues Pro-11–Tyr-102, Pro-111–Ala-201, and Asp-210–Glu-295. The Mitochondrial matrix portion of the chain corresponds to Pro-33–Lys-73. Lys-56 is a fatty acid 16:0 binding site. The helical transmembrane segment at Leu-74–Tyr-96 threads the bilayer. Residues Asp-97–Arg-116 are Mitochondrial intermembrane-facing. The chain crosses the membrane as a helical span at residues Ile-117 to Pro-133. Residues Thr-134 to Thr-178 are Mitochondrial matrix-facing. The helical transmembrane segment at Pro-179 to Tyr-195 threads the bilayer. The Mitochondrial intermembrane segment spans residues Asp-196 to Val-212. Residues Pro-213 to Pro-232 traverse the membrane as a helical segment. The Mitochondrial matrix segment spans residues Ala-233–Ala-266. A Cysteine sulfenic acid (-SOH) modification is found at Cys-254. The chain crosses the membrane as a helical span at residues Phe-267–Phe-289. Position 269 (Lys-269) interacts with fatty acid 16:0. The Mitochondrial intermembrane segment spans residues Glu-290 to Thr-307.

The protein belongs to the mitochondrial carrier (TC 2.A.29) family. Most probably functions as a monomer. Binds one purine nucleotide per monomer. However, has also been suggested to function as a homodimer or a homotetramer. Tightly associates with cardiolipin in the mitochondrion inner membrane; may stabilize and regulate its activity. Post-translationally, may undergo sulfenylation upon cold exposure. May increase the sensitivity of UCP1 thermogenic function to the activation by noradrenaline probably through structural effects. In terms of processing, may undergo ubiquitin-mediated proteasomal degradation. Brown adipose tissue.

Its subcellular location is the mitochondrion inner membrane. It catalyses the reaction H(+)(in) = H(+)(out). With respect to regulation, has no constitutive proton transporter activity and has to be activated by long-chain fatty acids/LCFAs. Inhibited by purine nucleotides. Both purine nucleotides and LCFAs bind the cytosolic side of the transporter and directly compete to activate or inhibit it. Activated by noradrenaline and reactive oxygen species. Despite lacking canonical translational encoding for selenocysteine, a small pool of the protein has been observed to selectively incorporate selenocysteine at 'Cys-254'. Selenocysteine-modified protein is highly sensitive to redox modification and may constitute a pool of protein highly sensitive to activation by elevated levels of reactive oxygen species (ROS). In terms of biological role, mitochondrial protein responsible for thermogenic respiration, a specialized capacity of brown adipose tissue and beige fat that participates in non-shivering adaptive thermogenesis to temperature and diet variations and more generally to the regulation of energy balance. Functions as a long-chain fatty acid/LCFA and proton symporter, simultaneously transporting one LCFA and one proton through the inner mitochondrial membrane. However, LCFAs remaining associated with the transporter via their hydrophobic tails, it results in an apparent transport of protons activated by LCFAs. Thereby, dissipates the mitochondrial proton gradient and converts the energy of substrate oxydation into heat instead of ATP. Regulates the production of reactive oxygen species/ROS by mitochondria. The protein is Mitochondrial brown fat uncoupling protein 1 of Mesocricetus auratus (Golden hamster).